A 365-amino-acid polypeptide reads, in one-letter code: Glycerol dehydrogenase (365 aa).

Residues Asp-37, Gly-94, Lys-95, Thr-116, and Ser-119 each contribute to the NAD(+) site. Position 121 (Asp-121) interacts with glycerol. NAD(+)-binding residues include Ser-125, Leu-127, and Tyr-131. Residues Asp-171, His-254, and His-271 each contribute to the Mn(2+) site. Glycerol is bound at residue His-254.

The protein belongs to the iron-containing alcohol dehydrogenase family. As to quaternary structure, homohexamer. Requires Mn(2+) as cofactor.

The enzyme catalyses glycerol + NAD(+) = dihydroxyacetone + NADH + H(+). It carries out the reaction hydroxyacetone + NADH + H(+) = (S)-propane-1,2-diol + NAD(+). It functions in the pathway polyol metabolism; glycerol fermentation; glycerone phosphate from glycerol (oxidative route): step 1/2. Inhibited by zinc. Catalyzes the NAD-dependent oxidation of glycerol to dihydroxyacetone (glycerone). Allows microorganisms to utilize glycerol as a source of carbon under anaerobic conditions. Exhibits a rather broad substrate specificity since it can also oxidize 1,2-propanediol and 2,3-butanediol and reduce dihydroxyacetone. Cannot use NADP(+) as an electron acceptor for the oxidation of glycerol. The chain is Glycerol dehydrogenase from Citrobacter freundii.